Here is a 78-residue protein sequence, read N- to C-terminus: Acyl carrier protein (78 aa).

Residues 2–77 form the Carrier domain; that stretch reads SNLEERVKKI…AAIDYVTANA (76 aa). Ser-37 carries the O-(pantetheine 4'-phosphoryl)serine modification.

Belongs to the acyl carrier protein (ACP) family. In terms of processing, 4'-phosphopantetheine is transferred from CoA to a specific serine of apo-ACP by AcpS. This modification is essential for activity because fatty acids are bound in thioester linkage to the sulfhydryl of the prosthetic group.

It is found in the cytoplasm. It participates in lipid metabolism; fatty acid biosynthesis. In terms of biological role, carrier of the growing fatty acid chain in fatty acid biosynthesis. This Vibrio vulnificus (strain CMCP6) protein is Acyl carrier protein.